Here is a 426-residue protein sequence, read N- to C-terminus: Tetracenomycin polyketide synthase ketoacyl synthase alpha subunit (426 aa).

The Ketosynthase family 3 (KS3) domain occupies 6 to 420 (EKRVVITGIG…GFQSAAVLAR (415 aa)). Residues Cys-173, His-313, and His-350 each act as for beta-ketoacyl synthase activity in the active site.

Belongs to the thiolase-like superfamily. Beta-ketoacyl-ACP synthases family. The tetracenomycin polyketide synthase (TCM PKS) is composed of a ketosynthase complex (TcmKL), an acyl carrier protein (TcmM), a cyclase (TcmN) and a probable second cyclase (TcmJ). TcmK and TcmL form a heterodimeric complex.

It catalyses the reaction 10 malonyl-CoA + 8 H(+) = tetracenomycin F2 + 10 CO2 + 10 CoA + 2 H2O. The protein operates within antibiotic biosynthesis; tetracenomycin C biosynthesis. Involved in the biosynthesis of tetracenomycin C (TCM C). Part of a type II polyketide synthase (PKS) that catalyzes the synthesis of tetracenomycin F2 (TCM F2), a precursor of TCM C, from malonyl-CoA. TcmK and TcmL form a heterodimeric alpha-beta complex that catalyzes the condensation reactions between the growing acyl-enzyme chain and the malonyl-CoA extender units. The polypeptide is Tetracenomycin polyketide synthase ketoacyl synthase alpha subunit (Streptomyces glaucescens).